Here is a 403-residue protein sequence, read N- to C-terminus: Phosphopentomutase (403 aa).

D13, D298, H303, D339, H340, and H351 together coordinate Mn(2+).

The protein belongs to the phosphopentomutase family. The cofactor is Mn(2+).

Its subcellular location is the cytoplasm. The catalysed reaction is 2-deoxy-alpha-D-ribose 1-phosphate = 2-deoxy-D-ribose 5-phosphate. It carries out the reaction alpha-D-ribose 1-phosphate = D-ribose 5-phosphate. It functions in the pathway carbohydrate degradation; 2-deoxy-D-ribose 1-phosphate degradation; D-glyceraldehyde 3-phosphate and acetaldehyde from 2-deoxy-alpha-D-ribose 1-phosphate: step 1/2. Functionally, isomerase that catalyzes the conversion of deoxy-ribose 1-phosphate (dRib-1-P) and ribose 1-phosphate (Rib-1-P) to deoxy-ribose 5-phosphate (dRib-5-P) and ribose 5-phosphate (Rib-5-P), respectively. The protein is Phosphopentomutase of Streptococcus pneumoniae serotype 2 (strain D39 / NCTC 7466).